A 116-amino-acid polypeptide reads, in one-letter code: Large ribosomal subunit protein bL20c (116 aa).

It belongs to the bacterial ribosomal protein bL20 family.

The protein localises to the plastid. The protein resides in the chloroplast. Its function is as follows. Binds directly to 23S ribosomal RNA and is necessary for the in vitro assembly process of the 50S ribosomal subunit. It is not involved in the protein synthesizing functions of that subunit. This Marchantia polymorpha (Common liverwort) protein is Large ribosomal subunit protein bL20c (rpl20).